The chain runs to 392 residues: Galactokinase (392 aa).

Positions 37, 43, 44, and 46 each coordinate alpha-D-galactose. Residues Gly136, Gly138, Ser140, and Ser141 each coordinate ATP. Asp186 is an alpha-D-galactose binding site. Asp186 functions as the Proton acceptor in the catalytic mechanism. Ser230 is modified (phosphoserine). Tyr236 provides a ligand contact to alpha-D-galactose.

The protein belongs to the GHMP kinase family. GalK subfamily. In terms of assembly, homodimer.

It carries out the reaction alpha-D-galactose + ATP = alpha-D-galactose 1-phosphate + ADP + H(+). The protein operates within carbohydrate metabolism; galactose metabolism. In terms of biological role, catalyzes the transfer of a phosphate from ATP to alpha-D-galactose and participates in the first committed step in the catabolism of galactose. This Canis lupus familiaris (Dog) protein is Galactokinase (GALK1).